The primary structure comprises 405 residues: Argininosuccinate synthase (405 aa).

11–19 (AYSGGLDTS) lines the ATP pocket. Tyrosine 90 serves as a coordination point for L-citrulline. Glycine 119 contacts ATP. L-aspartate is bound by residues threonine 121, asparagine 125, and aspartate 126. Asparagine 125 contacts L-citrulline. The L-citrulline site is built by arginine 129, serine 178, serine 187, glutamate 263, and tyrosine 275.

This sequence belongs to the argininosuccinate synthase family. Type 1 subfamily. In terms of assembly, homotetramer.

The protein localises to the cytoplasm. It catalyses the reaction L-citrulline + L-aspartate + ATP = 2-(N(omega)-L-arginino)succinate + AMP + diphosphate + H(+). It functions in the pathway amino-acid biosynthesis; L-arginine biosynthesis; L-arginine from L-ornithine and carbamoyl phosphate: step 2/3. In Legionella pneumophila subsp. pneumophila (strain Philadelphia 1 / ATCC 33152 / DSM 7513), this protein is Argininosuccinate synthase.